Consider the following 496-residue polypeptide: UDP-glycosyltransferase 73C4 (496 aa).

UDP-alpha-D-glucose-binding positions include Ser-297, 357-359 (SPQ), 374-382 (HCGWNSTLE), and 396-399 (FGDQ). The disordered stretch occupies residues 450–475 (SDDAKERRRRVKELGESAHKAVEEGG). A compositionally biased stretch (basic and acidic residues) spans 451–472 (DDAKERRRRVKELGESAHKAVE).

It belongs to the UDP-glycosyltransferase family.

The protein is UDP-glycosyltransferase 73C4 (UGT73C4) of Arabidopsis thaliana (Mouse-ear cress).